Here is a 299-residue protein sequence, read N- to C-terminus: Probable lipid kinase YegS (299 aa).

In terms of domain architecture, DAGKc spans 2 to 133; the sequence is AEFPASLLIL…IDMAQVNKQT (132 aa). ATP-binding positions include Thr-40, 66-72, and Thr-95; that span reads GDGTINE. Mg(2+) contacts are provided by Leu-215, Asp-218, and Leu-220. Glu-271 functions as the Proton acceptor in the catalytic mechanism.

Belongs to the diacylglycerol/lipid kinase family. YegS lipid kinase subfamily. Requires Mg(2+) as cofactor. Ca(2+) serves as cofactor.

It is found in the cytoplasm. Its function is as follows. Probably phosphorylates lipids; the in vivo substrate is unknown. In Escherichia coli O9:H4 (strain HS), this protein is Probable lipid kinase YegS.